A 312-amino-acid polypeptide reads, in one-letter code: tRNA pseudouridine synthase B (312 aa).

Residue D38 is the Nucleophile of the active site.

It belongs to the pseudouridine synthase TruB family. Type 1 subfamily.

It carries out the reaction uridine(55) in tRNA = pseudouridine(55) in tRNA. In terms of biological role, responsible for synthesis of pseudouridine from uracil-55 in the psi GC loop of transfer RNAs. This chain is tRNA pseudouridine synthase B, found in Syntrophus aciditrophicus (strain SB).